Reading from the N-terminus, the 501-residue chain is 2,3-bisphosphoglycerate-independent phosphoglycerate mutase (501 aa).

Mn(2+) contacts are provided by aspartate 12 and serine 62. Serine 62 functions as the Phosphoserine intermediate in the catalytic mechanism. Substrate contacts are provided by residues histidine 121, 150 to 151 (RD), arginine 182, arginine 188, 253 to 256 (RSDR), and lysine 322. The Mn(2+) site is built by aspartate 389, histidine 393, aspartate 430, histidine 431, and histidine 449.

This sequence belongs to the BPG-independent phosphoglycerate mutase family. Monomer. The cofactor is Mn(2+).

The enzyme catalyses (2R)-2-phosphoglycerate = (2R)-3-phosphoglycerate. It participates in carbohydrate degradation; glycolysis; pyruvate from D-glyceraldehyde 3-phosphate: step 3/5. Functionally, catalyzes the interconversion of 2-phosphoglycerate and 3-phosphoglycerate. In Ehrlichia ruminantium (strain Welgevonden), this protein is 2,3-bisphosphoglycerate-independent phosphoglycerate mutase.